The primary structure comprises 1444 residues: DNA polymerase III PolC-type (1444 aa).

The tract at residues 196–218 is disordered; it reads EAVQVMQKRQAEGQNGNSSAAPL. The segment covering 207-216 has biased composition (polar residues); it reads EGQNGNSSAA. The Exonuclease domain occupies 428–584; that stretch reads YCVFDVETTG…FDAEATAYLA (157 aa).

This sequence belongs to the DNA polymerase type-C family. PolC subfamily.

The protein localises to the cytoplasm. It carries out the reaction DNA(n) + a 2'-deoxyribonucleoside 5'-triphosphate = DNA(n+1) + diphosphate. Functionally, required for replicative DNA synthesis. This DNA polymerase also exhibits 3' to 5' exonuclease activity. In Listeria welshimeri serovar 6b (strain ATCC 35897 / DSM 20650 / CCUG 15529 / CIP 8149 / NCTC 11857 / SLCC 5334 / V8), this protein is DNA polymerase III PolC-type.